An 868-amino-acid chain; its full sequence is Dolichyl-phosphooligosaccharide-protein glycotransferase 3 (868 aa).

At 1 to 16 the chain is on the cytoplasmic side; sequence MQNAESWFKKYWHLSV. A helical membrane pass occupies residues 17-36; the sequence is LVIAALISVKLRILNPWNSV. Topologically, residues 37-101 are extracellular; the sequence is FTWTVRLGGN…IAGIIFSATS (65 aa). The DXD motif 1 motif lies at 45 to 47; sequence GND. Mn(2+) is bound at residue Asp-47. An a glycophospholipid-binding site is contributed by His-81. Residues 102-131 traverse the membrane as a helical segment; the sequence is GESLRAVLAFIPAIGGVLAILPVYLLTREV. The Cytoplasmic segment spans residues 132–133; it reads FD. The chain crosses the membrane as a helical span at residues 134 to 153; that stretch reads KRAAVIAAFLIAIVPGQFLQ. Topologically, residues 154–162 are extracellular; that stretch reads RSILGFNDH. Asp-161 lines the Mn(2+) pocket. The DXD motif 2 signature appears at 161–163; the sequence is DHH. His-162 serves as a coordination point for a glycophospholipid. Residue His-163 coordinates Mn(2+). A helical transmembrane segment spans residues 163 to 184; it reads HIWEAFWQVSALGTFLLAYNRW. The Cytoplasmic segment spans residues 185–199; sequence KGHDLSHNLTARQMA. Residues 200–212 form a helical membrane-spanning segment; that stretch reads YPVIAGITIGLYV. Topologically, residues 213–215 are extracellular; it reads LSW. A helical transmembrane segment spans residues 216–238; it reads GAGFIIAPIILAFMFFAFVLAGF. Residues 239-241 lie on the Cytoplasmic side of the membrane; that stretch reads VNA. Residues 242–262 traverse the membrane as a helical segment; it reads DRKNLSLVAVVTFAVSALIYL. The Extracellular segment spans residues 263 to 279; it reads PFAFNYPGFSTIFYSPF. The helical transmembrane segment at 280 to 303 threads the bilayer; sequence QLLVLLGSAVIAAAFYQIEKWNDV. Topologically, residues 304 to 312 are cytoplasmic; the sequence is GFFERVGLG. Residues 313 to 330 traverse the membrane as a helical segment; that stretch reads RKGMPLAVIVLTALIMGL. Residues 331-373 lie on the Extracellular side of the membrane; the sequence is FFVISPDFARNLLSVVRVVQPKGGALTIAEVYPFFFTHNGEFT. The TIXE motif signature appears at 357–360; sequence TIAE. A helical transmembrane segment spans residues 374–396; it reads LTNAVLHFGALFFFGMAGILYSA. Topologically, residues 397 to 404 are cytoplasmic; the sequence is YRFLKRRS. The helical transmembrane segment at 405–423 threads the bilayer; that stretch reads FPEMALLIWAIAMFIALWG. The Extracellular portion of the chain corresponds to 424–427; sequence QNRF. Arg-426 contacts a glycophospholipid. Residues 428-452 form a helical membrane-spanning segment; sequence AYYFAAVSAVYSALALSVVFDKLHL. The Cytoplasmic segment spans residues 453 to 468; that stretch reads YRALENAIGARNKLSY. A helical transmembrane segment spans residues 469–494; it reads FRVAFALLIALAAIYPTYILADAQSS. The Extracellular portion of the chain corresponds to 495–868; it reads YAGGPNKQWY…QNGEIIQLDL (374 aa). Residues 550–552 form an interacts with target acceptor peptide in protein substrate region; sequence WWD. A WWDYG motif motif is present at residues 550-554; that stretch reads WWDYG. A DKi motif motif is present at residues 613 to 622; the sequence is EMETGKYYAM.

Belongs to the STT3 family. The cofactor is Mg(2+). Mn(2+) is required as a cofactor. Requires Zn(2+) as cofactor.

The protein resides in the cell membrane. The enzyme catalyses an archaeal dolichyl phosphooligosaccharide + [protein]-L-asparagine = an archaeal dolichyl phosphate + a glycoprotein with the oligosaccharide chain attached by N-beta-D-glycosyl linkage to a protein L-asparagine.. Its pathway is protein modification; protein glycosylation. Oligosaccharyl transferase (OST) that catalyzes the initial transfer of a defined glycan (a glucose-linked heptasaccharide composed of 3 Glc, 2 Man, 2 Gal and a sulfate for A.fulgidus AglB-L) from the lipid carrier dolichol-monophosphate to an asparagine residue within an Asn-X-Ser/Thr consensus motif in nascent polypeptide chains, the first step in protein N-glycosylation. The protein is Dolichyl-phosphooligosaccharide-protein glycotransferase 3 (aglB3) of Archaeoglobus fulgidus (strain ATCC 49558 / DSM 4304 / JCM 9628 / NBRC 100126 / VC-16).